The chain runs to 326 residues: Interleukin-1-binding protein (326 aa).

The first 18 residues, 1–18 (MSILPVIFLSIFFYSSFV), serve as a signal peptide directing secretion. Ig-like domains are found at residues 24–115 (PECI…LNLT), 122–212 (SNID…RIVK), and 221–322 (PSTM…KTVT). Residues Cys48 and Cys99 are joined by a disulfide bond. N-linked (GlcNAc...) asparagine; by host glycans are attached at residues Asn80, Asn103, and Asn113. Cys143 and Cys194 are joined by a disulfide. Asn206 and Asn237 each carry an N-linked (GlcNAc...) asparagine; by host glycan. Cys242 and Cys309 are oxidised to a cystine.

Belongs to the interleukin-1 receptor family. Interacts with mouse Il1b.

It is found in the secreted. In terms of biological role, may reduce the host inflammatory response by interacting with inteleukin-1 beta (Il1b) and thus decreasing the association between IL1B and its cellular receptor. In Vaccinia virus (strain Western Reserve) (VACV), this protein is Interleukin-1-binding protein (OPG201).